The chain runs to 887 residues: CWF19-like protein 2 (887 aa).

The disordered stretch occupies residues 1 to 143 (MEAFSVRFES…DKRTEEECDS (143 aa)). Residues 11-103 (ASSIEERKEQ…KKQKCQKQSE (93 aa)) are a coiled coil. Positions 14–72 (IEERKEQTRNARAEVLRQAKHNFEKEQRGEERKRLRDEDTWMLPDVHERIEQFSQEHSE) are enriched in basic and acidic residues. S71 carries the phosphoserine modification. Over residues 73-98 (KKKKKKDKHSKKVKKEKKKKRKKQKC) the composition is skewed to basic residues. The span at 99 to 110 (QKQSESTDSSAS) shows a compositional bias: low complexity. The span at 124–143 (SDKEKTWKVKDKRTEEECDS) shows a compositional bias: basic and acidic residues. A coiled-coil region spans residues 164–254 (SSSLKAEKET…RNFEDIVAEK (91 aa)). K168 is covalently cross-linked (Glycyl lysine isopeptide (Lys-Gly) (interchain with G-Cter in SUMO2)). Disordered regions lie at residues 315–370 (LEME…DEDE) and 405–447 (SEES…GRRE). Positions 342–352 (CRRESALRKNQ) are enriched in basic and acidic residues. Phosphoserine is present on residues S354 and S366. Positions 414-430 (RSDRRQENRKPSDKKPL) are enriched in basic and acidic residues. Positions 433-442 (WSYNANQHST) are enriched in polar residues. S478 is modified (phosphoserine). Positions 495–524 (IKAEMMGNMELAEQLKAQLKEANKFKETQM) form a coiled coil. A Glycyl lysine isopeptide (Lys-Gly) (interchain with G-Cter in SUMO2) cross-link involves residue K597. A Phosphoserine modification is found at S622.

This sequence belongs to the CWF19 family.

This Mus musculus (Mouse) protein is CWF19-like protein 2 (Cwf19l2).